The sequence spans 26 residues: Metallothionein (26 aa).

Positions 1–14 (MGDCGCSGASSCNC) are enriched in low complexity. The tract at residues 1–26 (MGDCGCSGASSCNCGSGCSCSNCGSK) is disordered. 7 residues coordinate Cu(+): cysteine 4, cysteine 6, cysteine 12, cysteine 14, cysteine 18, cysteine 20, and cysteine 23. Over residues 15–26 (GSGCSCSNCGSK) the composition is skewed to cys residues.

Belongs to the metallothionein superfamily. Type 8 family.

The sequence is that of Metallothionein (cmt) from Neurospora crassa (strain ATCC 24698 / 74-OR23-1A / CBS 708.71 / DSM 1257 / FGSC 987).